The following is a 353-amino-acid chain: MAATKRKRRGGLEVQAKKPKRSSKDAGQPAKQADVAKEAEEENRDRIPGPVCKGKWKNKERILIFSSRGINFRTRHLMQDLRMLMPHSKADTKMDRKDKLFVINEVCEMKNCNKCIYFEAKKKQDLYMWLSNSPHGPSAKFLVQNIHTLAELKMTGNCLKGSRPLLSFDPAFDDLPHYALLKEFLIQIFSTPRYHPKSQPFVDHVFTFTILDNRIWFRNFQIIEEDAALVEIGPRFVLNLIKIFQGSFGGPTLYENPHYQSPNMHRRVIRSITAAKYRERQQVKDVQKLRKKEPKTILPHDPTADVFVIPAEEKPVEIQWVKPEPKVDLKARKRRIYKRHRKLQQKMSRGSAK.

The tract at residues 1–50 (MAATKRKRRGGLEVQAKKPKRSSKDAGQPAKQADVAKEAEEENRDRIPGP) is disordered. The span at 34-47 (DVAKEAEEENRDRI) shows a compositional bias: basic and acidic residues. Positions 60–249 (ERILIFSSRG…LIKIFQGSFG (190 aa)) constitute a Brix domain. Lys-160 participates in a covalent cross-link: Glycyl lysine isopeptide (Lys-Gly) (interchain with G-Cter in SUMO2). At Ser-261 the chain carries Phosphoserine. Lys-276 bears the N6-acetyllysine mark. Residues Lys-314 and Lys-322 each participate in a glycyl lysine isopeptide (Lys-Gly) (interchain with G-Cter in SUMO2) cross-link. Residues 334–344 (RRIYKRHRKLQ) are compositionally biased toward basic residues. Residues 334–353 (RRIYKRHRKLQQKMSRGSAK) form a disordered region.

This sequence belongs to the BRX1 family.

The protein localises to the nucleus. It is found in the nucleolus. Its function is as follows. Required for biogenesis of the 60S ribosomal subunit. The chain is Ribosome biogenesis protein BRX1 homolog (Brix1) from Mus musculus (Mouse).